The primary structure comprises 257 residues: Protein LigF (257 aa).

Residues 1–82 (MTLKLYSFGP…YLEDVFPESG (82 aa)) form the GST N-terminal domain. One can recognise a GST C-terminal domain in the interval 89-257 (DPFKRAEMRV…LLKRQNEKVA (169 aa)).

It belongs to the GST superfamily.

Functionally, lignin degradation enzyme. This is Protein LigF (ligF) from Sphingobium sp. (strain NBRC 103272 / SYK-6).